Consider the following 500-residue polypeptide: Probable 26S proteasome non-ATPase regulatory subunit 3 (500 aa).

In terms of domain architecture, PCI spans 253–432 (ARFLYYLGRI…GYMRTKESTD (180 aa)). The segment at 462-484 (RYPPKSYGKELESAEERREREQQ) is disordered. Residues 468 to 484 (YGKELESAEERREREQQ) are compositionally biased toward basic and acidic residues.

The protein belongs to the proteasome subunit S3 family. The 26S proteasome is composed of a core protease, known as the 20S proteasome, capped at one or both ends by the 19S regulatory complex (RC). The RC is composed of at least 18 different subunits in two subcomplexes, the base and the lid, which form the portions proximal and distal to the 20S proteolytic core, respectively.

In terms of biological role, acts as a regulatory subunit of the 26 proteasome which is involved in the ATP-dependent degradation of ubiquitinated proteins. The protein is Probable 26S proteasome non-ATPase regulatory subunit 3 (DOXA2) of Anopheles stephensi (Indo-Pakistan malaria mosquito).